We begin with the raw amino-acid sequence, 340 residues long: MIRGAPAPMAEPPPVIFCHDSPKRVLVSVIRTTPATPPCSSVGEPEPPPPLVPTSPGFSDFMVYPWRWGENAHNVTLSPGAAGGVVSAGLPAATELPTLRGAPPSSASVAAVSGGEDEEEASSPDSGHLKDGIRRGRPRADTVRDLINEGEHSSSRIRCNICNRVFPREKSLQAHKRTHTGERPYLCDYPDCGKAFVQSGQLKTHQRLHTGEKPFVCSENGCLSRFTHANRHCPKHPYARLKREEPTDTLSKHQSTDNKAAAEWLAKYWEMREQRTPTLKGKLVQKADQEQQDPLEYLQSDEEDDEKSGAQRRLQEQRERLHGALALIELANLTGAPLRQ.

Residues 96 to 140 (LPTLRGAPPSSASVAAVSGGEDEEEASSPDSGHLKDGIRRGRPRA) are disordered. The segment covering 101–114 (GAPPSSASVAAVSG) has biased composition (low complexity). A compositionally biased stretch (basic and acidic residues) spans 127-140 (GHLKDGIRRGRPRA). 2 consecutive C2H2-type zinc fingers follow at residues 157–179 (IRCNICNRVFPREKSLQAHKRTH) and 185–209 (YLCDYPDCGKAFVQSGQLKTHQRLH). A disordered region spans residues 280–317 (KGKLVQKADQEQQDPLEYLQSDEEDDEKSGAQRRLQEQ). Residues 299 to 332 (QSDEEDDEKSGAQRRLQEQRERLHGALALIELAN) adopt a coiled-coil conformation. Serine 300 is modified (phosphoserine). Residues 307 to 317 (KSGAQRRLQEQ) are compositionally biased toward basic and acidic residues.

Belongs to the krueppel C2H2-type zinc-finger protein family.

It localises to the nucleus. Functionally, transcriptional activator. May be involved in transcriptional activation of erythroid genes. This chain is Zinc finger protein 367 (Znf367), found in Rattus norvegicus (Rat).